We begin with the raw amino-acid sequence, 142 residues long: Large ribosomal subunit protein uL11 (142 aa).

It belongs to the universal ribosomal protein uL11 family. Part of the ribosomal stalk of the 50S ribosomal subunit. Interacts with L10 and the large rRNA to form the base of the stalk. L10 forms an elongated spine to which L12 dimers bind in a sequential fashion forming a multimeric L10(L12)X complex. In terms of processing, one or more lysine residues are methylated.

Its function is as follows. Forms part of the ribosomal stalk which helps the ribosome interact with GTP-bound translation factors. The sequence is that of Large ribosomal subunit protein uL11 from Erwinia tasmaniensis (strain DSM 17950 / CFBP 7177 / CIP 109463 / NCPPB 4357 / Et1/99).